We begin with the raw amino-acid sequence, 170 residues long: Macro domain-containing protein VPA0103 (170 aa).

The Macro domain maps to 1 to 170; sequence MNAISLVQGD…SIWQHALTQH (170 aa).

The protein belongs to the MacroD-type family.

In Vibrio parahaemolyticus serotype O3:K6 (strain RIMD 2210633), this protein is Macro domain-containing protein VPA0103.